The sequence spans 174 residues: Adenylate kinase (174 aa).

The segment at 12 to 41 (STGDMLRAAIKAGTPLGLEAKKIIDEGGLV) is NMP. AMP contacts are provided by residues T13, R18, 39–41 (GLV), 67–70 (GFPR), and Q74. The interval 104-141 (GRRVHLASGRTYHVTYNPPKVEGKDDVTGEDLIQRDDD) is LID. ATP-binding positions include R105 and 114 to 115 (TY). Positions 138 and 149 each coordinate AMP.

Belongs to the adenylate kinase family. Monomer.

It localises to the cytoplasm. The enzyme catalyses AMP + ATP = 2 ADP. The protein operates within purine metabolism; AMP biosynthesis via salvage pathway; AMP from ADP: step 1/1. In terms of biological role, catalyzes the reversible transfer of the terminal phosphate group between ATP and AMP. Plays an important role in cellular energy homeostasis and in adenine nucleotide metabolism. This is Adenylate kinase from Neisseria flavescens.